We begin with the raw amino-acid sequence, 289 residues long: Serine/threonine-protein phosphatase Pgam5, mitochondrial (289 aa).

This sequence belongs to the phosphoglycerate mutase family. BPG-dependent PGAM subfamily. Interacts with Pk92B/ASK1.

Its subcellular location is the mitochondrion outer membrane. The enzyme catalyses O-phospho-L-seryl-[protein] + H2O = L-seryl-[protein] + phosphate. It carries out the reaction O-phospho-L-threonyl-[protein] + H2O = L-threonyl-[protein] + phosphate. Functionally, displays phosphatase activity for serine/threonine residues, and dephosphorylates and activates Pk92B kinase. Has apparently no phosphoglycerate mutase activity. In Drosophila grimshawi (Hawaiian fruit fly), this protein is Serine/threonine-protein phosphatase Pgam5, mitochondrial.